Reading from the N-terminus, the 369-residue chain is Cobalt-precorrin-5B C(1)-methyltransferase (369 aa).

It belongs to the CbiD family.

The catalysed reaction is Co-precorrin-5B + S-adenosyl-L-methionine = Co-precorrin-6A + S-adenosyl-L-homocysteine. It participates in cofactor biosynthesis; adenosylcobalamin biosynthesis; cob(II)yrinate a,c-diamide from sirohydrochlorin (anaerobic route): step 6/10. Its function is as follows. Catalyzes the methylation of C-1 in cobalt-precorrin-5B to form cobalt-precorrin-6A. This chain is Cobalt-precorrin-5B C(1)-methyltransferase, found in Leptospira borgpetersenii serovar Hardjo-bovis (strain JB197).